Reading from the N-terminus, the 206-residue chain is MKPFTVLNGIAALLDRPNVDTDQIIPKQFLRKIERTGFGVHLFHDWRYLDDAGTKLNPEFSLNQERYKGASILLTRDNFGCGSSREHAPWALEDYGFRSIIAPSYADIFFNNCFKNGMLPVVLKSEEVEELFRFVSGNVGAKLQIDLDKQTVTGPTGKVYTFEVDSFRKYCLYNGLDDIGLTLKQGSKIGEFEKKQKEVEPWLYVI.

This sequence belongs to the LeuD family. LeuD type 1 subfamily. In terms of assembly, heterodimer of LeuC and LeuD.

The catalysed reaction is (2R,3S)-3-isopropylmalate = (2S)-2-isopropylmalate. It participates in amino-acid biosynthesis; L-leucine biosynthesis; L-leucine from 3-methyl-2-oxobutanoate: step 2/4. Its function is as follows. Catalyzes the isomerization between 2-isopropylmalate and 3-isopropylmalate, via the formation of 2-isopropylmaleate. This Leptospira borgpetersenii serovar Hardjo-bovis (strain JB197) protein is 3-isopropylmalate dehydratase small subunit.